A 115-amino-acid chain; its full sequence is Large ribosomal subunit protein bL20 (115 aa).

The protein belongs to the bacterial ribosomal protein bL20 family.

Its function is as follows. Binds directly to 23S ribosomal RNA and is necessary for the in vitro assembly process of the 50S ribosomal subunit. It is not involved in the protein synthesizing functions of that subunit. The polypeptide is Large ribosomal subunit protein bL20 (Borrelia duttonii (strain Ly)).